The following is a 542-amino-acid chain: Chaperonin GroEL (542 aa).

ATP is bound by residues 29 to 32, 86 to 90, glycine 413, 476 to 478, and aspartate 492; these read TLGP, DGTTT, and NAA. Residues 522 to 542 are disordered; sequence PDENGPAAVPDMGMGGMGGMM.

This sequence belongs to the chaperonin (HSP60) family. Forms a cylinder of 14 subunits composed of two heptameric rings stacked back-to-back. Interacts with the co-chaperonin GroES.

The protein localises to the cytoplasm. It catalyses the reaction ATP + H2O + a folded polypeptide = ADP + phosphate + an unfolded polypeptide.. Together with its co-chaperonin GroES, plays an essential role in assisting protein folding. The GroEL-GroES system forms a nano-cage that allows encapsulation of the non-native substrate proteins and provides a physical environment optimized to promote and accelerate protein folding. In Listeria monocytogenes serotype 4b (strain CLIP80459), this protein is Chaperonin GroEL.